A 1159-amino-acid polypeptide reads, in one-letter code: Ferroxidase HEPHL1 (1159 aa).

Positions 1–24 are cleaved as a signal peptide; sequence MPRKQPAGCIFLLTFLGLSGLVGT. Plastocyanin-like domains follow at residues 25–207, 218–366, 379–561, 571–719, 731–907, and 915–1092; these read VTRT…LLVC, TRND…VDNC, QRRY…LLVC, TQKG…VSSC, MIRT…LITC, and KGRR…VPSN. At 25 to 1114 the chain is on the extracellular side; the sequence is VTRTYYIGIV…KNLGPTGAKA (1090 aa). Cu cation contacts are provided by H127 and H129. An N-linked (GlcNAc...) asparagine glycan is attached at N161. C181 and C207 are joined by a disulfide. Cu cation is bound by residues H187 and H189. N236 carries N-linked (GlcNAc...) asparagine glycosylation. C285 and C366 are disulfide-bonded. Residues H304, C347, and H352 each contribute to the Cu cation site. The N-linked (GlcNAc...) asparagine glycan is linked to N407. C535 and C561 form a disulfide bridge. N-linked (GlcNAc...) asparagine glycosylation is present at N589. The cysteines at positions 638 and 719 are disulfide-linked. Positions 657, 700, 705, and 710 each coordinate Cu cation. N772 is a glycosylation site (N-linked (GlcNAc...) asparagine). C881 and C907 are joined by a disulfide. An N-linked (GlcNAc...) asparagine glycan is attached at N935. Residues H1003, H1006, H1008, H1048, C1049, H1050, H1054, and M1059 each coordinate Cu cation. A helical transmembrane segment spans residues 1115-1135; sequence ALVILFIIGLLLLITTVILSL. Topologically, residues 1136-1159 are cytoplasmic; sequence RLCSAMKQTDYQQVQSCALPTDAL.

This sequence belongs to the multicopper oxidase family. Requires Cu cation as cofactor.

It is found in the membrane. The catalysed reaction is 4 Fe(2+) + O2 + 4 H(+) = 4 Fe(3+) + 2 H2O. Its function is as follows. Is a copper-binding glycoprotein with ferroxidase activity. It oxidizes Fe(2+) to Fe(3+) without releasing radical oxygen species. May be involved in the regulation of intracellular iron content. This Homo sapiens (Human) protein is Ferroxidase HEPHL1 (HEPHL1).